The chain runs to 278 residues: Formyltetrahydrofolate deformylase (278 aa).

An ACT domain is found at 6–85 (ILLTDCPDDK…RLIGTQRKRI (80 aa)). Residue Asp223 is part of the active site.

The protein belongs to the PurU family.

It catalyses the reaction (6R)-10-formyltetrahydrofolate + H2O = (6S)-5,6,7,8-tetrahydrofolate + formate + H(+). The protein operates within purine metabolism; IMP biosynthesis via de novo pathway; formate from 10-formyl-5,6,7,8-tetrahydrofolate: step 1/1. In terms of biological role, catalyzes the hydrolysis of 10-formyltetrahydrofolate (formyl-FH4) to formate and tetrahydrofolate (FH4). The protein is Formyltetrahydrofolate deformylase of Haemophilus influenzae (strain ATCC 51907 / DSM 11121 / KW20 / Rd).